We begin with the raw amino-acid sequence, 66 residues long: Alpha-conotoxin RegIIA (66 aa).

The signal sequence occupies residues 1-21 (MGMRMMFTVFLLVVLTTTVVS). Positions 22–49 (STSVRASDGRNAAADNRASDLIAQIVRR) are excised as a propeptide. 2 cysteine pairs are disulfide-bonded: Cys51-Cys57 and Cys52-Cys65. Residues 53-55 (SHP) form a ser-Xaa-Pro motif, crucial for potent interaction with nAChR region. A Cysteine amide modification is found at Cys65.

This sequence belongs to the conotoxin A superfamily. Expressed by the venom duct.

It is found in the secreted. In terms of biological role, alpha-conotoxins act on postsynaptic membranes, they bind to the nicotinic acetylcholine receptors (nAChR) and thus inhibit them. This toxin potently inhibits alpha-3 containing subunit nAChR. It inhibits alpha-3-beta-2/CHRNA3-CHRNB2 (IC(50)=10.7-33 nM (rat)/132.4-704.1 nM (human)) and alpha-3-beta-4/CHRNA3-CHRNB4 (IC(50)=47.3-97 nM (rat)/52.1 nM (human)). It also inhibits alpha-7/CHRNA7 nAChR with IC(50)=103-210 nM (human)/41-61.2 nM (rat) nAChRs. It is more potent on alpha-3-beta-2 receptors in human than in rat, due to a variation (Pro vs Gln) in alpha-3 subunit in these orthologs. Conversely, does not show species-specific differences in sensitivity at the alpha-3-beta-4 receptor. This Conus regius (Crown cone) protein is Alpha-conotoxin RegIIA.